The following is a 317-amino-acid chain: Protoheme IX farnesyltransferase (317 aa).

7 helical membrane-spanning segments follow: residues 33-53 (VMSL…GEIN), 54-74 (PILG…SGAL), 117-137 (VILG…TIFF), 154-174 (IVIG…CVTG), 181-201 (VILF…LALF), 242-262 (FFTG…SAIF), and 285-305 (MFAY…ADHF).

It belongs to the UbiA prenyltransferase family. Protoheme IX farnesyltransferase subfamily.

It localises to the cell inner membrane. The enzyme catalyses heme b + (2E,6E)-farnesyl diphosphate + H2O = Fe(II)-heme o + diphosphate. Its pathway is porphyrin-containing compound metabolism; heme O biosynthesis; heme O from protoheme: step 1/1. In terms of biological role, converts heme B (protoheme IX) to heme O by substitution of the vinyl group on carbon 2 of heme B porphyrin ring with a hydroxyethyl farnesyl side group. This chain is Protoheme IX farnesyltransferase, found in Agrobacterium fabrum (strain C58 / ATCC 33970) (Agrobacterium tumefaciens (strain C58)).